We begin with the raw amino-acid sequence, 218 residues long: Small ribosomal subunit protein uS3 (218 aa).

The region spanning 38–106 (VREYINKRLQ…RVHINIVEIK (69 aa)) is the KH type-2 domain.

This sequence belongs to the universal ribosomal protein uS3 family. In terms of assembly, part of the 30S ribosomal subunit. Forms a tight complex with proteins S10 and S14.

Its function is as follows. Binds the lower part of the 30S subunit head. Binds mRNA in the 70S ribosome, positioning it for translation. This is Small ribosomal subunit protein uS3 from Geobacillus thermodenitrificans (strain NG80-2).